The primary structure comprises 105 residues: Large ribosomal subunit protein uL24 (105 aa).

The protein belongs to the universal ribosomal protein uL24 family. Part of the 50S ribosomal subunit.

Functionally, one of two assembly initiator proteins, it binds directly to the 5'-end of the 23S rRNA, where it nucleates assembly of the 50S subunit. Its function is as follows. One of the proteins that surrounds the polypeptide exit tunnel on the outside of the subunit. This chain is Large ribosomal subunit protein uL24, found in Sorangium cellulosum (strain So ce56) (Polyangium cellulosum (strain So ce56)).